The sequence spans 689 residues: Glycine--tRNA ligase beta subunit (689 aa).

Belongs to the class-II aminoacyl-tRNA synthetase family. In terms of assembly, tetramer of two alpha and two beta subunits.

Its subcellular location is the cytoplasm. The catalysed reaction is tRNA(Gly) + glycine + ATP = glycyl-tRNA(Gly) + AMP + diphosphate. The sequence is that of Glycine--tRNA ligase beta subunit (glyS) from Pasteurella multocida (strain Pm70).